Reading from the N-terminus, the 354-residue chain is Uroporphyrinogen decarboxylase (354 aa).

Residues 27–31 (RQAGR), Asp77, Tyr154, Thr209, and His327 contribute to the substrate site.

It belongs to the uroporphyrinogen decarboxylase family. Homodimer.

It localises to the cytoplasm. It carries out the reaction uroporphyrinogen III + 4 H(+) = coproporphyrinogen III + 4 CO2. It participates in porphyrin-containing compound metabolism; protoporphyrin-IX biosynthesis; coproporphyrinogen-III from 5-aminolevulinate: step 4/4. In terms of biological role, catalyzes the decarboxylation of four acetate groups of uroporphyrinogen-III to yield coproporphyrinogen-III. The polypeptide is Uroporphyrinogen decarboxylase (Escherichia fergusonii (strain ATCC 35469 / DSM 13698 / CCUG 18766 / IAM 14443 / JCM 21226 / LMG 7866 / NBRC 102419 / NCTC 12128 / CDC 0568-73)).